The primary structure comprises 184 residues: Ribosome-recycling factor (184 aa).

This sequence belongs to the RRF family.

Its subcellular location is the cytoplasm. In terms of biological role, responsible for the release of ribosomes from messenger RNA at the termination of protein biosynthesis. May increase the efficiency of translation by recycling ribosomes from one round of translation to another. The chain is Ribosome-recycling factor from Clostridium botulinum (strain Langeland / NCTC 10281 / Type F).